We begin with the raw amino-acid sequence, 2162 residues long: MEEEEHRGVVLVCSICGFLFAVLGPLSFWILWAVNWRPWRLYSWIYARKWPAYVQGPQLSTLCSFFTLFAWLVVVSPITVLLVWGGILIALLERNIIGLAVIMVGVALLLSFYSIMLWWRTQWQSSKAVAYLLLLAVGLLCAYEFCAVYVTTGASASELNSPSGFFFGVSAISLAINMLFISKILFNGSGFDVDEYVRRLYKFAYSDCVEVAPVSCSPDPPDPSELYMTKSSRVLHLGLLYLCSLMVLVVYSILYGLTSKEARWLGALTSVAVVILDWNLGLCSFRFELLKSRMIALFVAGTSRVFLICFGVHYWYLGHCISYAFVASVLLAAAVSCWLSISNPSVARIDALRSTVIKLREGFRRKGQTSSSNSSDGCGSSVKRSSGSVEAGPHGNATDSMYRSNSQSDCVNWNNVPFDRSNSCQEGQSSDKNIDSGRASLAHRSNSCLSAVAVQDPETAVVSADRHGDPTASLVVCSSSGLESQGCESSGSATASGNQQLLDLNLAAIFQDRLNDPRITSMLKRNGGLGDVELANLLQDKGLDPNFSYMMKDKVMDPRILALLQRSSLDADREHQDDVDVTGTDSDRLDTTIANQISLSEELRRSGLENWLNLSRLMFHQVAGSPIRAFVVFTLIFIIETVTVAVHRPKPIKVINATHEQFEFGFSILLLSPVVCSIMAFIWSLCAEEMTMTSKPRKYGFIAWLLSTCVGLLLSFLSKSSVILGLSLTVPLMVACLSFAIPIWMRNGYRFWIPGGELDSRENIRQAPGKKERALFAISITVFTASVIGLGAIVSAKPLDALGYKGWDADKKSFYSPYATSMYLGWALSSTIAVLATGVIPIVAWFATYRFSPSSAICVGLFATVLVSFCGVSYWGVVNSRQDGVPLKADFLAALLPLLCIPAVFSLFTGMYKWKDDDWKISRGVYLFVGMGVLLLLGAISAVIVTIRPWTVGVACLLVILFLVFAIGVIHYWTSNNFYLTRTQMLLVCSLAFLLALAAFLMGLFQEKPFVGASIGYFSFLFLLTGRALTVLLSPPIVVYSPRVLPVYVYDAHADSAKNVSYAFLILYGIALATEVWGVIASLILNPPFIGAAISAITLVIAFSFAVSRPCLTLKMLEDAVHFLSKDTVVQAMSRSANKTRNAISGTYSAPQRSASSAALLVGDPAITLDRAGNFVLPRADVMKLRDRLRNEEITAGSFFCGVKNCLMIGSPVDVDYRRNMCAHARILALEEAIDTEWVYMWDKFGGYLLLLLGLTAKAEQIQDEVRLRLFLDSIGLSDLSAKEIKKWMPEDRRHFELIQESYIREKEMEEEVLMQRREEEGKGRERRKALLEREERKWKELEISLLSSIPNAGSRDAAAMAAAVRAVGGDSALEDSFARDRVSSIARHIRKAQLARRAEQTGIPDTVCILDDEPRSTGRHCGEIDLCLCESKKVSFSIAVMVQPVSGPVCLFGTEFQKKVCWEILVAGSEQGMEAGQVGLRLVTKGERMTTVAKEWNIGASSIADGRWHLVTVTIDADLGEATSFIDGVYDGYQNALPLPRNNGIWEPGTDIWVGARPPTDLDAFGRSDSEGSDSKMQIMDAFLWGRCLTEDEVAMLHTAICSAEYGLFDLAAEDAWHGSYSARVDDWESEEANFELYDQEDVEWDGQYSSGRKRHARDSVAIDIDSFARRPRKPRFETREEVNQRMLSVERAVREALIAKGERNFTDQEFPPDDRSLFVDPMNPSLKLQVVSEWMRPSDIAKEVSISSQPCLFSGSVNSSDVCQGRLGDCWFLSAVAVLTEMARISEVIITPEYNEEGIYTVRFCIQGEWVAVVVDDWIPCESPGKPAFATSRKQNELWVSILEKAYAKLHGSYEALEGGLVQDALVDLTGGAGEEIDMRSPQAQIDLASGRLWSQLLHFKQEGFLLGAGSPSGSDAHISSSGIVQGHAYSILQVREVDGHKLVQIRNPWANEVEWNGPWSDSSQEWTERMKHKLKHVPQSKNGVFWMSWQDFQIHFRSIYVCRVYPPEMRYSVHGQWRGYSAGGCQDYDSWHQNPQYRLRVTGRDALYPVHVFITLTQGVGFSRKTNGFRNYQSSHDSSMFYIGMRILKTRGCRAAYNIYMHESVGGTDYVNSREISCELVLEPYPKGYTIVPTTIHPGEEAPFVLSVFTKAPIKLEAV.

Residues 1 to 33 form the signal peptide; it reads MEEEEHRGVVLVCSICGFLFAVLGPLSFWILWA. Topologically, residues 34–70 are extracellular; that stretch reads VNWRPWRLYSWIYARKWPAYVQGPQLSTLCSFFTLFA. The helical transmembrane segment at 71-91 threads the bilayer; that stretch reads WLVVVSPITVLLVWGGILIAL. At 92–95 the chain is on the cytoplasmic side; the sequence is LERN. A helical transmembrane segment spans residues 96-116; sequence IIGLAVIMVGVALLLSFYSIM. Residues 117 to 127 lie on the Extracellular side of the membrane; sequence LWWRTQWQSSK. Residues 128-148 form a helical membrane-spanning segment; the sequence is AVAYLLLLAVGLLCAYEFCAV. Residues 149-164 are Cytoplasmic-facing; the sequence is YVTTGASASELNSPSG. A helical membrane pass occupies residues 165-185; the sequence is FFFGVSAISLAINMLFISKIL. The Extracellular segment spans residues 186–236; sequence FNGSGFDVDEYVRRLYKFAYSDCVEVAPVSCSPDPPDPSELYMTKSSRVLH. The helical transmembrane segment at 237–257 threads the bilayer; it reads LGLLYLCSLMVLVVYSILYGL. Topologically, residues 258–264 are cytoplasmic; sequence TSKEARW. Residues 265–285 traverse the membrane as a helical segment; that stretch reads LGALTSVAVVILDWNLGLCSF. The Extracellular portion of the chain corresponds to 286–294; sequence RFELLKSRM. Residues 295-315 traverse the membrane as a helical segment; it reads IALFVAGTSRVFLICFGVHYW. Residues 316–320 lie on the Cytoplasmic side of the membrane; that stretch reads YLGHC. Residues 321-341 form a helical membrane-spanning segment; the sequence is ISYAFVASVLLAAAVSCWLSI. Residues 342–626 are Extracellular-facing; it reads SNPSVARIDA…LMFHQVAGSP (285 aa). Residues 366–403 are disordered; sequence KGQTSSSNSSDGCGSSVKRSSGSVEAGPHGNATDSMYR. Residues 370–381 are compositionally biased toward low complexity; the sequence is SSSNSSDGCGSS. The chain crosses the membrane as a helical span at residues 627–647; sequence IRAFVVFTLIFIIETVTVAVH. Topologically, residues 648 to 663 are cytoplasmic; it reads RPKPIKVINATHEQFE. Residues 664–684 form a helical membrane-spanning segment; the sequence is FGFSILLLSPVVCSIMAFIWS. Residues 685–697 are Extracellular-facing; sequence LCAEEMTMTSKPR. A helical membrane pass occupies residues 698 to 718; sequence KYGFIAWLLSTCVGLLLSFLS. The Cytoplasmic segment spans residues 719-722; it reads KSSV. The helical transmembrane segment at 723–743 threads the bilayer; it reads ILGLSLTVPLMVACLSFAIPI. The Extracellular segment spans residues 744–773; that stretch reads WMRNGYRFWIPGGELDSRENIRQAPGKKER. The chain crosses the membrane as a helical span at residues 774–794; that stretch reads ALFAISITVFTASVIGLGAIV. Over 795-825 the chain is Cytoplasmic; the sequence is SAKPLDALGYKGWDADKKSFYSPYATSMYLG. The helical transmembrane segment at 826–846 threads the bilayer; that stretch reads WALSSTIAVLATGVIPIVAWF. The Extracellular portion of the chain corresponds to 847-856; it reads ATYRFSPSSA. A helical transmembrane segment spans residues 857-877; sequence ICVGLFATVLVSFCGVSYWGV. The Cytoplasmic portion of the chain corresponds to 878 to 890; sequence VNSRQDGVPLKAD. The helical transmembrane segment at 891–911 threads the bilayer; the sequence is FLAALLPLLCIPAVFSLFTGM. At 912–924 the chain is on the extracellular side; that stretch reads YKWKDDDWKISRG. Residues 925 to 945 traverse the membrane as a helical segment; sequence VYLFVGMGVLLLLGAISAVIV. The Cytoplasmic segment spans residues 946–949; that stretch reads TIRP. The helical transmembrane segment at 950 to 970 threads the bilayer; sequence WTVGVACLLVILFLVFAIGVI. Over 971-984 the chain is Extracellular; sequence HYWTSNNFYLTRTQ. A helical membrane pass occupies residues 985 to 1005; that stretch reads MLLVCSLAFLLALAAFLMGLF. The Cytoplasmic segment spans residues 1006–1019; sequence QEKPFVGASIGYFS. A helical transmembrane segment spans residues 1020–1040; it reads FLFLLTGRALTVLLSPPIVVY. The Extracellular portion of the chain corresponds to 1041–1063; it reads SPRVLPVYVYDAHADSAKNVSYA. Residues 1064-1084 traverse the membrane as a helical segment; it reads FLILYGIALATEVWGVIASLI. Residues 1085–2162 are Cytoplasmic-facing; it reads LNPPFIGAAI…TKAPIKLEAV (1078 aa). Phosphoserine is present on residues Ser1372 and Ser1377. A Calpain catalytic 1 domain is found at 1418-1611; that stretch reads TGRHCGEIDL…ICSAEYGLFD (194 aa). Ser1668 is subject to Phosphoserine. Residues 1706-2008 form the Calpain catalytic 2 domain; sequence NFTDQEFPPD…FRSIYVCRVY (303 aa). Catalysis depends on residues Cys1772, His1930, and Asn1950.

Belongs to the peptidase C2 family. Post-translationally, autocatalytic proteolytic cleavage leading to the production of mainly cytoplasmic localized subproducts of about 85 and 120 kDa. In terms of tissue distribution, ubiquitously expressed with higher levels in embryos, vasculatures, leaf primordia, leaf margins, and shoot apical meristem (SAM).

The protein localises to the endoplasmic reticulum membrane. Its subcellular location is the cytoplasm. It localises to the cell membrane. It is found in the endosome membrane. Functionally, essential protease involved in epiderm development. Required for aleurone cell development in the endosperm probably by maintaining and restricting the aleurone and embryonic epidermal L1 cell-layer fates as well as meristems organization. Involved in the maintenance of adaxial/abaxial axis information in developing leaves, probably by regulating cell proliferation and expansion. Does not need calcium ions to be active. This chain is Calpain-type cysteine protease ADL1 (ADL1), found in Oryza sativa subsp. japonica (Rice).